Here is a 309-residue protein sequence, read N- to C-terminus: Biotin synthase (309 aa).

The 225-residue stretch at 35–259 (NKIQISSLLS…MIPKSYIRLS (225 aa)) folds into the Radical SAM core domain. 3 residues coordinate [4Fe-4S] cluster: cysteine 50, cysteine 54, and cysteine 57. [2Fe-2S] cluster contacts are provided by cysteine 94, cysteine 125, cysteine 185, and arginine 257.

Belongs to the radical SAM superfamily. Biotin synthase family. Homodimer. Requires [4Fe-4S] cluster as cofactor. The cofactor is [2Fe-2S] cluster.

It carries out the reaction (4R,5S)-dethiobiotin + (sulfur carrier)-SH + 2 reduced [2Fe-2S]-[ferredoxin] + 2 S-adenosyl-L-methionine = (sulfur carrier)-H + biotin + 2 5'-deoxyadenosine + 2 L-methionine + 2 oxidized [2Fe-2S]-[ferredoxin]. It functions in the pathway cofactor biosynthesis; biotin biosynthesis; biotin from 7,8-diaminononanoate: step 2/2. Functionally, catalyzes the conversion of dethiobiotin (DTB) to biotin by the insertion of a sulfur atom into dethiobiotin via a radical-based mechanism. This is Biotin synthase from Rickettsia felis (strain ATCC VR-1525 / URRWXCal2) (Rickettsia azadi).